The following is a 358-amino-acid chain: Peptide chain release factor 1 (358 aa).

At Gln233 the chain carries N5-methylglutamine.

The protein belongs to the prokaryotic/mitochondrial release factor family. In terms of processing, methylated by PrmC. Methylation increases the termination efficiency of RF1.

The protein resides in the cytoplasm. Its function is as follows. Peptide chain release factor 1 directs the termination of translation in response to the peptide chain termination codons UAG and UAA. The polypeptide is Peptide chain release factor 1 (Lachnoclostridium phytofermentans (strain ATCC 700394 / DSM 18823 / ISDg) (Clostridium phytofermentans)).